The sequence spans 460 residues: Ufm1-specific protease 2 (460 aa).

Active-site residues include Cys-293, Asp-417, and His-419.

This sequence belongs to the peptidase C78 family.

The protein resides in the endoplasmic reticulum. It is found in the cytoplasm. It localises to the nucleus. Functionally, thiol-dependent isopeptidase that specifically cleaves UFM1, a ubiquitin-like modifier protein, from conjugated proteins. While it is also able to mediate the processing of UFM1 precursors, a prerequisite for conjugation reactions, UFSP2 mainly acts as a protein deUFMylase that mediates deconjugation of UFM1 from target proteins. The sequence is that of Ufm1-specific protease 2 from Gallus gallus (Chicken).